An 83-amino-acid chain; its full sequence is uncharacterized protein (83 aa).

This is an uncharacterized protein from Bacillus subtilis (strain 168).